The sequence spans 295 residues: Protease HtpX homolog (295 aa).

The next 2 membrane-spanning stretches (helical) occupy residues 6–26 (IGLF…VTSV) and 40–60 (LSSL…VSLL). H148 is a Zn(2+) binding site. E149 is a catalytic residue. H152 provides a ligand contact to Zn(2+). The next 2 membrane-spanning stretches (helical) occupy residues 163 to 183 (LIQG…SYAL) and 198 to 218 (ISNI…VAYF). Residue E223 coordinates Zn(2+).

This sequence belongs to the peptidase M48B family. Requires Zn(2+) as cofactor.

It is found in the cell inner membrane. The protein is Protease HtpX homolog of Leptospira borgpetersenii serovar Hardjo-bovis (strain JB197).